Reading from the N-terminus, the 350-residue chain is Very-long-chain 3-oxoacyl-CoA reductase (350 aa).

Residues 28-48 (SLVLLAGIGALSVGTFALRLV) form a helical membrane-spanning segment. Residues Val79, Asp134, Asn161, Lys196, Tyr228, Lys232, Val261, and Ser263 each coordinate NADP(+). Tyr228 acts as the Proton donor in catalysis. Lys232 functions as the Lowers pKa of active site Tyr in the catalytic mechanism.

Belongs to the short-chain dehydrogenases/reductases (SDR) family.

It is found in the endoplasmic reticulum membrane. It carries out the reaction a very-long-chain (3R)-3-hydroxyacyl-CoA + NADP(+) = a very-long-chain 3-oxoacyl-CoA + NADPH + H(+). It functions in the pathway lipid metabolism; fatty acid biosynthesis. Its function is as follows. Component of the microsomal membrane bound fatty acid elongation system, which produces the 26-carbon very long-chain fatty acids (VLCFA) from palmitate. Catalyzes the reduction of the 3-ketoacyl-CoA intermediate that is formed in each cycle of fatty acid elongation. VLCFAs serve as precursors for ceramide and sphingolipids. The polypeptide is Very-long-chain 3-oxoacyl-CoA reductase (Mycosarcoma maydis (Corn smut fungus)).